The primary structure comprises 357 residues: Homoserine O-acetyltransferase (357 aa).

The 290-residue stretch at 51–340 (NVIVICHALT…EPYGHDAFLI (290 aa)) folds into the AB hydrolase-1 domain. Ser-147 acts as the Nucleophile in catalysis. Arg-216 is a substrate binding site. Catalysis depends on residues Asp-306 and His-335. Asp-336 is a binding site for substrate.

This sequence belongs to the AB hydrolase superfamily. MetX family. As to quaternary structure, homodimer.

The protein resides in the cytoplasm. It carries out the reaction L-homoserine + acetyl-CoA = O-acetyl-L-homoserine + CoA. It participates in amino-acid biosynthesis; L-methionine biosynthesis via de novo pathway; O-acetyl-L-homoserine from L-homoserine: step 1/1. Its function is as follows. Transfers an acetyl group from acetyl-CoA to L-homoserine, forming acetyl-L-homoserine. The sequence is that of Homoserine O-acetyltransferase from Chlorobium chlorochromatii (strain CaD3).